Consider the following 424-residue polypeptide: UPF0415 protein C7orf25 homolog (424 aa).

It belongs to the UPF0415 family.

This Xenopus tropicalis (Western clawed frog) protein is UPF0415 protein C7orf25 homolog.